The primary structure comprises 227 residues: Pyridoxine/pyridoxamine 5'-phosphate oxidase (227 aa).

Substrate-binding positions include 23–26 (RREY) and Lys81. Residues 76–81 (RIVLLK), 91–92 (YT), Arg97, Lys98, and Gln120 each bind FMN. Tyr138, Arg142, and Ser146 together coordinate substrate. FMN contacts are provided by residues 155–156 (QS) and Trp200. 206–208 (RLH) contacts substrate. Residue Arg210 coordinates FMN.

Belongs to the pyridoxamine 5'-phosphate oxidase family. In terms of assembly, homodimer. FMN is required as a cofactor.

It catalyses the reaction pyridoxamine 5'-phosphate + O2 + H2O = pyridoxal 5'-phosphate + H2O2 + NH4(+). The enzyme catalyses pyridoxine 5'-phosphate + O2 = pyridoxal 5'-phosphate + H2O2. It functions in the pathway cofactor metabolism; pyridoxal 5'-phosphate salvage; pyridoxal 5'-phosphate from pyridoxamine 5'-phosphate: step 1/1. The protein operates within cofactor metabolism; pyridoxal 5'-phosphate salvage; pyridoxal 5'-phosphate from pyridoxine 5'-phosphate: step 1/1. Its function is as follows. Catalyzes the oxidation of either pyridoxine 5'-phosphate (PNP) or pyridoxamine 5'-phosphate (PMP) into pyridoxal 5'-phosphate (PLP). The polypeptide is Pyridoxine/pyridoxamine 5'-phosphate oxidase (Pectobacterium atrosepticum (strain SCRI 1043 / ATCC BAA-672) (Erwinia carotovora subsp. atroseptica)).